A 337-amino-acid polypeptide reads, in one-letter code: ATP-dependent 6-phosphofructokinase (337 aa).

Gly11 lines the ATP pocket. Residue 21–25 (RAVVR) coordinates ADP. Residues 72–73 (RY) and 102–105 (GDGS) each bind ATP. Asp103 is a binding site for Mg(2+). Position 125-127 (125-127 (TID)) interacts with substrate. The Proton acceptor role is filled by Asp127. An ADP-binding site is contributed by Arg154. Residues Arg162 and 169–171 (MGR) contribute to the substrate site. ADP is bound by residues 185–187 (GAD), Arg212, and 214–216 (KNH). Residues Glu223, Arg245, and 251–254 (HILR) each bind substrate.

Belongs to the phosphofructokinase type A (PFKA) family. ATP-dependent PFK group I subfamily. Prokaryotic clade 'B1' sub-subfamily. In terms of assembly, homotetramer. Requires Mg(2+) as cofactor.

The protein resides in the cytoplasm. The enzyme catalyses beta-D-fructose 6-phosphate + ATP = beta-D-fructose 1,6-bisphosphate + ADP + H(+). It participates in carbohydrate degradation; glycolysis; D-glyceraldehyde 3-phosphate and glycerone phosphate from D-glucose: step 3/4. With respect to regulation, allosterically activated by ADP and other diphosphonucleosides, and allosterically inhibited by phosphoenolpyruvate. Functionally, catalyzes the phosphorylation of D-fructose 6-phosphate to fructose 1,6-bisphosphate by ATP, the first committing step of glycolysis. The chain is ATP-dependent 6-phosphofructokinase from Streptococcus equi subsp. zooepidemicus (strain H70).